A 194-amino-acid polypeptide reads, in one-letter code: Calcium channel flower (194 aa).

3 helical membrane passes run 34–54 (LLGI…VFSI), 59–79 (VSCL…MLLE), and 107–127 (GLYI…ASLF).

Belongs to the calcium channel flower family. In terms of assembly, homomultimer. Associates with the dally/ magu complex.

It is found in the cell membrane. It localises to the cytoplasmic vesicle. The protein resides in the secretory vesicle. The protein localises to the synaptic vesicle membrane. Its subcellular location is the presynaptic cell membrane. It is found in the endosome. With respect to regulation, channel activity is inhibited by La(3+), which reduces Ca(2+) influx and thus inhibits it's function in promoting activity-dependent bulk endocytosis (ADBE) in response to high stimuli. Its function is as follows. Transmembrane protein which mediates synaptic endocytosis, fitness-based cell culling, neuronal culling, morphogen gradient scaling, and calcium transport. Regulates synaptic endocytosis and hence couples exo- with endocytosis. Controls two major modes of synaptic vesicle (SV) endocytosis in the synaptic boutons of neuromuscular junctions (NMJs); Ca(2+) channel-independent Clathrin-mediated endocytosis (CME) in response to mild stimulation, and Ca(2+) channel-dependent activity-dependent bulk endocytosis (ADBE) in response to strong stimulation. Functions in ADBE and subsequent SV reformation from bulk endosomes by initiating Ca(2+) channel-dependent phosphatidylinositol 4,5-bisphosphate (PtdIns(4,5)P2) compartmentalization in synaptic boutons. There it acts at the periactive zone to provide the low Ca(2+) levels required to initiate Calcineurin activation and upregulate PtdIns(4,5)P2. Conversely PtdIns(4,5)P2 enhances fwe Ca(2+) channel-activity, establishing a positive feedback loop that induces PtdIns(4,5)P2 microdomain at the periactive zone. These microdomains trigger bulk membrane invagination (i.e. ADBE) by triggering actin polymerization while also promoting localization of fwe to bulk endosomes, thereby removing the ADBE trigger to reduce endocytosis and prevent excess membrane uptake. PtdIns(4,5)P2 then promotes SV reformation from the bulk endosomes, to coordinate ADBE and subsequent SV reformation. Different combinations of the flower isoforms at the cell membrane are also required for the identification and elimination of suboptimal or supernumerary cells during development, regeneration, and adulthood. Required for the recognition and elimination of unfit cells in the developing wing during cell competition. In the developing pupal retina, mediates the elimination of unwanted postmitotic neurons, including supernumerary photoreceptor neurons that form at the periphery of the retina and are contained within incomplete ommatidia units. Also required for efficient elimination and replacement of old neurons by newly generated neurons during regeneration in the adult brain following mechanical injury. Downstream of the flower fitness fingerprints, cells identified as unwanted or unfit are eliminated via apoptosis through the expression of ahuizotl (azot). However, the cells marked for elimination by the flower isoforms only undergo apoptosis if additional thresholds are met; (1) their neighboring fit/healthy cells express different levels of the fwe isoforms, and (2) the levels of the protective signal SPARC expressed by the loser or unwanted cells are unable to inhibit caspase activation. These additional thresholds for flower-mediated apoptosis, allows useful cells to recover from transient and limited stress before they are unnecessarily eliminated. Functions with dally and magu in a mechanism of scaling, which utilises apoptosis to ensure that the dpp morphogen gradient, which mediates organ growth, remains proportional to the size of the growing wing. In this mechanism, fwe represses dally- and Magu-dependent activity in expanding the gradient, and dally/Magu inhibits fwe-dependent apoptosis to keep cell death rate low. When the levels of these different proteins are optimally regulated the gradient correctly scales with organ growth but when this fails, fwe-mediated apoptosis is activated to trim the developing tissue to match the correct size of the gradient. This is Calcium channel flower from Drosophila erecta (Fruit fly).